The primary structure comprises 79 residues: ATP synthase subunit c (79 aa).

2 consecutive transmembrane segments (helical) span residues 10-30 (IAGALMMGLGALGAAVGIGVL) and 52-72 (FFIVMGLVDAVPMIAVGLAMY).

The protein belongs to the ATPase C chain family. F-type ATPases have 2 components, F(1) - the catalytic core - and F(0) - the membrane proton channel. F(1) has five subunits: alpha(3), beta(3), gamma(1), delta(1), epsilon(1). F(0) has three main subunits: a(1), b(2) and c(10-14). The alpha and beta chains form an alternating ring which encloses part of the gamma chain. F(1) is attached to F(0) by a central stalk formed by the gamma and epsilon chains, while a peripheral stalk is formed by the delta and b chains.

The protein resides in the cell inner membrane. Functionally, f(1)F(0) ATP synthase produces ATP from ADP in the presence of a proton or sodium gradient. F-type ATPases consist of two structural domains, F(1) containing the extramembraneous catalytic core and F(0) containing the membrane proton channel, linked together by a central stalk and a peripheral stalk. During catalysis, ATP synthesis in the catalytic domain of F(1) is coupled via a rotary mechanism of the central stalk subunits to proton translocation. In terms of biological role, key component of the F(0) channel; it plays a direct role in translocation across the membrane. A homomeric c-ring of between 10-14 subunits forms the central stalk rotor element with the F(1) delta and epsilon subunits. This is ATP synthase subunit c from Thiobacillus denitrificans (strain ATCC 25259 / T1).